The sequence spans 195 residues: Ribonuclease HII (195 aa).

The RNase H type-2 domain maps to 8–195; that stretch reads WGVVGVDEAG…FAPVRRLLGG (188 aa). Residues D14, E15, and D106 each coordinate a divalent metal cation.

This sequence belongs to the RNase HII family. Requires Mn(2+) as cofactor. The cofactor is Mg(2+).

It localises to the cytoplasm. The enzyme catalyses Endonucleolytic cleavage to 5'-phosphomonoester.. Its function is as follows. Endonuclease that specifically degrades the RNA of RNA-DNA hybrids. The chain is Ribonuclease HII from Halorhodospira halophila (strain DSM 244 / SL1) (Ectothiorhodospira halophila (strain DSM 244 / SL1)).